The chain runs to 178 residues: Large ribosomal subunit protein uL6 (178 aa).

Belongs to the universal ribosomal protein uL6 family. Part of the 50S ribosomal subunit.

In terms of biological role, this protein binds to the 23S rRNA, and is important in its secondary structure. It is located near the subunit interface in the base of the L7/L12 stalk, and near the tRNA binding site of the peptidyltransferase center. This Helicobacter pylori (strain G27) protein is Large ribosomal subunit protein uL6.